A 258-amino-acid chain; its full sequence is Imidazole glycerol phosphate synthase subunit HisF (258 aa).

Residues Asp11 and Asp130 contribute to the active site.

This sequence belongs to the HisA/HisF family. In terms of assembly, heterodimer of HisH and HisF.

It is found in the cytoplasm. It carries out the reaction 5-[(5-phospho-1-deoxy-D-ribulos-1-ylimino)methylamino]-1-(5-phospho-beta-D-ribosyl)imidazole-4-carboxamide + L-glutamine = D-erythro-1-(imidazol-4-yl)glycerol 3-phosphate + 5-amino-1-(5-phospho-beta-D-ribosyl)imidazole-4-carboxamide + L-glutamate + H(+). Its pathway is amino-acid biosynthesis; L-histidine biosynthesis; L-histidine from 5-phospho-alpha-D-ribose 1-diphosphate: step 5/9. Its function is as follows. IGPS catalyzes the conversion of PRFAR and glutamine to IGP, AICAR and glutamate. The HisF subunit catalyzes the cyclization activity that produces IGP and AICAR from PRFAR using the ammonia provided by the HisH subunit. The sequence is that of Imidazole glycerol phosphate synthase subunit HisF from Escherichia coli O1:K1 / APEC.